Reading from the N-terminus, the 545-residue chain is CTP synthase (545 aa).

An amidoligase domain region spans residues 1 to 266 (MTHFIFVTGG…DDLICERFGY (266 aa)). A CTP-binding site is contributed by S13. S13 contacts UTP. Residues 14-19 (SLGKGI) and D71 contribute to the ATP site. Mg(2+) is bound by residues D71 and E140. CTP is bound by residues 147–149 (DIE), 187–192 (KTKPTQ), and K223. UTP is bound by residues 187–192 (KTKPTQ) and K223. 239 to 241 (KDA) is a binding site for ATP. One can recognise a Glutamine amidotransferase type-1 domain in the interval 292–543 (RVAMVGKYVE…IDAAKKQHLK (252 aa)). Residue G353 coordinates L-glutamine. Residue C380 is the Nucleophile; for glutamine hydrolysis of the active site. L-glutamine is bound by residues 381–384 (LGMQ), E404, and R471. Residues H516 and E518 contribute to the active site.

This sequence belongs to the CTP synthase family. As to quaternary structure, homotetramer.

The catalysed reaction is UTP + L-glutamine + ATP + H2O = CTP + L-glutamate + ADP + phosphate + 2 H(+). It carries out the reaction L-glutamine + H2O = L-glutamate + NH4(+). It catalyses the reaction UTP + NH4(+) + ATP = CTP + ADP + phosphate + 2 H(+). It functions in the pathway pyrimidine metabolism; CTP biosynthesis via de novo pathway; CTP from UDP: step 2/2. Allosterically activated by GTP, when glutamine is the substrate; GTP has no effect on the reaction when ammonia is the substrate. The allosteric effector GTP functions by stabilizing the protein conformation that binds the tetrahedral intermediate(s) formed during glutamine hydrolysis. Inhibited by the product CTP, via allosteric rather than competitive inhibition. Its function is as follows. Catalyzes the ATP-dependent amination of UTP to CTP with either L-glutamine or ammonia as the source of nitrogen. Regulates intracellular CTP levels through interactions with the four ribonucleotide triphosphates. The sequence is that of CTP synthase from Acinetobacter baylyi (strain ATCC 33305 / BD413 / ADP1).